We begin with the raw amino-acid sequence, 1652 residues long: Maestro heat-like repeat-containing protein family member 1 (1652 aa).

HEAT repeat units lie at residues 3–41, 260–300, 344–382, 385–423, 1369–1407, 1410–1448, and 1616–1652; these read ETYA…SKPA, EEQL…VGSR, CCSP…AAAA, EVKK…HGYL, LMLL…GSPD, QTHS…LMDL, and QVDL…VKFA.

Belongs to the MROH1 family. In terms of assembly, homooligomer; homooligomerizes at lysosome scission sites.

The protein localises to the lysosome membrane. Its function is as follows. Lysosome fission factor. Recruited to lysosomes by RAB7 (RAB7A or RAB7B) at scission sites and homooligomerizes to mediate the constriction and scission of lysosomal tubules. May sever membranes by inserting amphipathic helices into one bilayer leaflet. Lysosome fission is required to maintain their steady-state number, shape, size, composition and function, and to accomplish regeneration. In Bos taurus (Bovine), this protein is Maestro heat-like repeat-containing protein family member 1 (MROH1).